A 167-amino-acid chain; its full sequence is NADH-quinone oxidoreductase subunit B 2 (167 aa).

[4Fe-4S] cluster is bound by residues C39, C40, C104, and C134.

The protein belongs to the complex I 20 kDa subunit family. NDH-1 is composed of 14 different subunits. Subunits NuoB, C, D, E, F, and G constitute the peripheral sector of the complex. The cofactor is [4Fe-4S] cluster.

The protein localises to the cell inner membrane. It carries out the reaction a quinone + NADH + 5 H(+)(in) = a quinol + NAD(+) + 4 H(+)(out). Functionally, NDH-1 shuttles electrons from NADH, via FMN and iron-sulfur (Fe-S) centers, to quinones in the respiratory chain. Couples the redox reaction to proton translocation (for every two electrons transferred, four hydrogen ions are translocated across the cytoplasmic membrane), and thus conserves the redox energy in a proton gradient. In Burkholderia mallei (strain NCTC 10247), this protein is NADH-quinone oxidoreductase subunit B 2.